The following is a 480-amino-acid chain: Uridine 5'-monophosphate synthase (480 aa).

Position 2 is an N-acetylalanine (alanine 2). The interval 2–214 (AAVGAALGPL…VFVAANHNGS (213 aa)) is OPRTase. Tyrosine 37 bears the Phosphotyrosine mark. The residue at position 214 (serine 214) is a Phosphoserine. The interval 215 to 220 (PLSIKE) is domain linker. Residues 221 to 480 (APKELSFSAR…WEAYLSRLGV (260 aa)) are OMPdecase. An orotidine 5'-phosphate-binding site is contributed by serine 257. Residues serine 257, aspartate 259, and 281 to 283 (KTH) contribute to the UMP site. Orotidine 5'-phosphate is bound by residues lysine 281, lysine 314, aspartate 317, threonine 321, serine 372, 430–432 (QQY), and 450–451 (GR). Residues lysine 314 and aspartate 317 each act as for OMPdecase activity in the active site. UMP is bound by residues aspartate 317, threonine 321, serine 372, 430–432 (QQY), and 450–451 (GR).

In the N-terminal section; belongs to the purine/pyrimidine phosphoribosyltransferase family. It in the C-terminal section; belongs to the OMP decarboxylase family. In terms of assembly, homodimer; dimerization is required for enzymatic activity.

The enzyme catalyses orotidine 5'-phosphate + diphosphate = orotate + 5-phospho-alpha-D-ribose 1-diphosphate. It carries out the reaction orotidine 5'-phosphate + H(+) = UMP + CO2. Its pathway is pyrimidine metabolism; UMP biosynthesis via de novo pathway; UMP from orotate: step 1/2. It participates in pyrimidine metabolism; UMP biosynthesis via de novo pathway; UMP from orotate: step 2/2. Functionally, bifunctional enzyme catalyzing the last two steps of de novo pyrimidine biosynthesis, orotate phosphoribosyltransferase (OPRT), which converts orotate to orotidine-5'-monophosphate (OMP), and orotidine-5'-monophosphate decarboxylase (ODC), the terminal enzymatic reaction that decarboxylates OMP to uridine monophosphate (UMP). The sequence is that of Uridine 5'-monophosphate synthase (UMPS) from Pongo abelii (Sumatran orangutan).